The chain runs to 483 residues: Zinc finger CCCH domain-containing protein 25 (483 aa).

The segment at 157-184 adopts a C3H1-type zinc-finger fold; the sequence is RNRAHICSFFIRGECTRGDECPYRHEMP. The RRM domain maps to 228 to 301; the sequence is RTLYVGGLNS…QRLKLTWGRP (74 aa). 2 disordered regions span residues 298–317 and 336–483; these read WGRP…QGSV and PPML…GSSQ. The segment covering 336–351 has biased composition (pro residues); sequence PPMLQYYMHPPPPQPP. The span at 370-380 shows a compositional bias: low complexity; that stretch reads SSSKESGSSTS. Polar residues predominate over residues 381–391; it reads DNRGASSSSYT. 2 stretches are compositionally biased toward low complexity: residues 392-401 and 409-423; these read MPPHGHYPQH and YGGY…YPPY. Over residues 438 to 459 the composition is skewed to pro residues; that stretch reads QPGPGSRPNPPHPSSVSAPPPD. The span at 460 to 476 shows a compositional bias: low complexity; it reads SVSAAPSGSSQQSADAA.

The polypeptide is Zinc finger CCCH domain-containing protein 25 (Arabidopsis thaliana (Mouse-ear cress)).